The chain runs to 368 residues: Transaldolase (368 aa).

The active-site Schiff-base intermediate with substrate is the lysine 140.

It belongs to the transaldolase family. Type 2 subfamily.

The protein localises to the cytoplasm. The catalysed reaction is D-sedoheptulose 7-phosphate + D-glyceraldehyde 3-phosphate = D-erythrose 4-phosphate + beta-D-fructose 6-phosphate. The protein operates within carbohydrate degradation; pentose phosphate pathway; D-glyceraldehyde 3-phosphate and beta-D-fructose 6-phosphate from D-ribose 5-phosphate and D-xylulose 5-phosphate (non-oxidative stage): step 2/3. Its function is as follows. Transaldolase is important for the balance of metabolites in the pentose-phosphate pathway. The polypeptide is Transaldolase (Thermobifida fusca (strain YX)).